We begin with the raw amino-acid sequence, 161 residues long: uncharacterized protein (161 aa).

This sequence belongs to the SixA phosphatase family.

This is an uncharacterized protein from Mycobacterium leprae (strain TN).